Reading from the N-terminus, the 466-residue chain is Soluble pyridine nucleotide transhydrogenase (466 aa).

Glu36–Cys45 is a binding site for FAD.

Belongs to the class-I pyridine nucleotide-disulfide oxidoreductase family. FAD serves as cofactor.

The protein resides in the cytoplasm. The enzyme catalyses NAD(+) + NADPH = NADH + NADP(+). In terms of biological role, conversion of NADPH, generated by peripheral catabolic pathways, to NADH, which can enter the respiratory chain for energy generation. This is Soluble pyridine nucleotide transhydrogenase from Erwinia tasmaniensis (strain DSM 17950 / CFBP 7177 / CIP 109463 / NCPPB 4357 / Et1/99).